We begin with the raw amino-acid sequence, 25 residues long: Unknown protein 4 (25 aa).

The span at 1–10 (IEHNAEEIRK) shows a compositional bias: basic and acidic residues. The disordered stretch occupies residues 1–25 (IEHNAEEIRKTAIRTAVQNTAQQTK). Positions 16–25 (AVQNTAQQTK) are enriched in polar residues.

The protein is Unknown protein 4 of Lonomia obliqua (Moth).